We begin with the raw amino-acid sequence, 527 residues long: Bifunctional purine biosynthesis protein PurH (527 aa).

Residues 1 to 149 (MASDFLPVRR…KNFARVAVAT (149 aa)) form the MGS-like domain.

This sequence belongs to the PurH family.

It carries out the reaction (6R)-10-formyltetrahydrofolate + 5-amino-1-(5-phospho-beta-D-ribosyl)imidazole-4-carboxamide = 5-formamido-1-(5-phospho-D-ribosyl)imidazole-4-carboxamide + (6S)-5,6,7,8-tetrahydrofolate. It catalyses the reaction IMP + H2O = 5-formamido-1-(5-phospho-D-ribosyl)imidazole-4-carboxamide. It functions in the pathway purine metabolism; IMP biosynthesis via de novo pathway; 5-formamido-1-(5-phospho-D-ribosyl)imidazole-4-carboxamide from 5-amino-1-(5-phospho-D-ribosyl)imidazole-4-carboxamide (10-formyl THF route): step 1/1. Its pathway is purine metabolism; IMP biosynthesis via de novo pathway; IMP from 5-formamido-1-(5-phospho-D-ribosyl)imidazole-4-carboxamide: step 1/1. This is Bifunctional purine biosynthesis protein PurH from Xanthomonas oryzae pv. oryzae (strain KACC10331 / KXO85).